Consider the following 34-residue polypeptide: uncharacterized protein (34 aa).

The helical transmembrane segment at 10 to 30 (LIITSSFFAIAAVLVLSVLLI) threads the bilayer.

It localises to the membrane. This is an uncharacterized protein from Escherichia coli O6:H1 (strain CFT073 / ATCC 700928 / UPEC).